We begin with the raw amino-acid sequence, 197 residues long: dITP/XTP pyrophosphatase (197 aa).

8-13 (TGNPGK) lines the substrate pocket. Mg(2+) contacts are provided by Glu40 and Asp69. Asp69 functions as the Proton acceptor in the catalytic mechanism. Substrate contacts are provided by residues Ser70, 154-157 (FGYD), Lys177, and 182-183 (HR).

The protein belongs to the HAM1 NTPase family. As to quaternary structure, homodimer. Mg(2+) is required as a cofactor.

The enzyme catalyses XTP + H2O = XMP + diphosphate + H(+). It carries out the reaction dITP + H2O = dIMP + diphosphate + H(+). The catalysed reaction is ITP + H2O = IMP + diphosphate + H(+). Its function is as follows. Pyrophosphatase that catalyzes the hydrolysis of nucleoside triphosphates to their monophosphate derivatives, with a high preference for the non-canonical purine nucleotides XTP (xanthosine triphosphate), dITP (deoxyinosine triphosphate) and ITP. Seems to function as a house-cleaning enzyme that removes non-canonical purine nucleotides from the nucleotide pool, thus preventing their incorporation into DNA/RNA and avoiding chromosomal lesions. The sequence is that of dITP/XTP pyrophosphatase from Photorhabdus laumondii subsp. laumondii (strain DSM 15139 / CIP 105565 / TT01) (Photorhabdus luminescens subsp. laumondii).